Consider the following 144-residue polypeptide: Intraflagellar transport protein 25 homolog (144 aa).

N29, D32, and T37 together coordinate Ca(2+).

The protein belongs to the IFT25 family. As to quaternary structure, component of the IFT complex B, at least composed of IFT20, IFT22, IFT25, IFT27, IFT46, IFT52, TRAF3IP1/IFT54, IFT57, IFT74, IFT80, IFT81, and IFT88. Interacts with IFT27. Interacts with IFT88. Detected in placenta.

It is found in the cell projection. The protein resides in the cilium. Component of the IFT complex B required for sonic hedgehog/SHH signaling. May mediate transport of SHH components: required for the export of SMO and PTCH1 receptors out of the cilium and the accumulation of GLI2 at the ciliary tip in response to activation of the SHH pathway, suggesting it is involved in the dynamic transport of SHH signaling molecules within the cilium. Not required for ciliary assembly. Its role in intraflagellar transport is mainly seen in tissues rich in ciliated cells such as kidney and testis. Essential for male fertility, spermiogenesis and sperm flagella formation. Plays a role in the early development of the kidney. May be involved in the regulation of ureteric bud initiation. This Homo sapiens (Human) protein is Intraflagellar transport protein 25 homolog.